The primary structure comprises 511 residues: MFTLGTALSNQIDANWQTYVMIIVYFIILLIIGFYGYRQATGNLSEFMLGGRSIGPYITALSAGASDMSGWMIMGLPGSVYSTGLSAIWITIGLTLGAYINYFVVAPRLRVYTEIAGDAITLPDFFKNRLDDKKNIIKIISGLIIVVFFTLYTHSGFVSGGKLFESAFGLNYHAGLLIVAIIVIFYTFFGGYLAVSITDFFQGVIMLIAMVMVPIVALLKLNGWDTFHDIAQMKPTNLDLFRGTTVLGIVSLFSWGLGYFGQPHIIVRFMSIKSHKLLPKARRLGISWMAVGLLGAIGVGLTGISFISERHIKLEDPETLFIVMSQILFHPLVGGFLLAAILAAIMSTISSQLLVTSSSLTEDFYKLIRGSDKASSHQKEFVLIGRLSVLLVAIVAITIAWHPNDTILNLVGNAWAGFGAAFSPLVLYSLYWKDLTRAGAISGMVAGAVVVIVWISWIKPLATINAFFGMYEIIPGFIVSVLITYIVSKLTKKPDDYVIENLNKVKHVVKE.

13 consecutive transmembrane segments (helical) span residues 16–36 (WQTYVMIIVYFIILLIIGFYG), 54–74 (IGPYITALSAGASDMSGWMIM), 85–105 (LSAIWITIGLTLGAYINYFVV), 139–159 (IISGLIIVVFFTLYTHSGFVS), 175–195 (GLLIVAIIVIFYTFFGGYLAV), 199–219 (DFFQGVIMLIAMVMVPIVALL), 246–266 (VLGIVSLFSWGLGYFGQPHII), 284–304 (LGISWMAVGLLGAIGVGLTGI), 327–347 (ILFHPLVGGFLLAAILAAIMS), 381–401 (FVLIGRLSVLLVAIVAITIAW), 407–427 (ILNLVGNAWAGFGAAFSPLVL), 438–458 (AGAISGMVAGAVVVIVWISWI), and 467–487 (FFGMYEIIPGFIVSVLITYIV).

Belongs to the sodium:solute symporter (SSF) (TC 2.A.21) family.

It localises to the cell membrane. It catalyses the reaction L-proline(in) + Na(+)(in) = L-proline(out) + Na(+)(out). Functionally, catalyzes the sodium-dependent uptake of extracellular L-proline. This Staphylococcus epidermidis (strain ATCC 35984 / DSM 28319 / BCRC 17069 / CCUG 31568 / BM 3577 / RP62A) protein is Sodium/proline symporter (putP).